The following is a 125-amino-acid chain: Probable growth factor FPV211 (125 aa).

Residues 1–48 form the signal peptide; it reads MKEPLIEVKREYNLIKTLTGKKFVVSTSIVVVLLIINMIFYGIRIHEL. Residues 80–120 enclose the EGF-like domain; the sequence is LFEKCKSKFNNFCIYGECMNIINLDKKFCICNKGYTGNRCD. Disulfide bonds link Cys84–Cys97, Cys92–Cys108, and Cys110–Cys119.

The protein resides in the secreted. In Vertebrata (FPV), this protein is Probable growth factor FPV211.